The chain runs to 351 residues: MTDRKVALISGVTGQDGAYLAELLLDEGYIVHGIKRRSSSFNTQRIEHIYQERHDPEARFFLHYGDMTDSTNLLRIVQQTQPHEIYNLAAQSHVQVSFETPEYTANADAIGTLRMLEAIRILGLIHRTRFYQASTSELYGLAQEIPQNEKTPFYPRSPYAAAKLYAYWIVVNYREAYGMHASNGILFNHESPLRGETFVTRKITRAAAAISLGKQEVLYLGNLDAQRDWGHAREYVRGMWMMCQQDRPGDYVLATGVTTSVRTFVEWAFEETGMTIEWVGEGIEERGIDAATGKCVVAVDPRYFRPTEVDLLLGDATKARQVLGWRHETSVRDLACEMVREDLSYLRGTRQ.

NADP(+) contacts are provided by residues 11–16 (GVTGQD), 66–67 (DM), 88–92 (LAAQS), and Y103. Residue T135 is part of the active site. Active-site nucleophile residues include E137 and Y159. The NADP(+) site is built by K163, H189, and R194.

It belongs to the NAD(P)-dependent epimerase/dehydratase family. GDP-mannose 4,6-dehydratase subfamily. Requires NADP(+) as cofactor.

It catalyses the reaction GDP-alpha-D-mannose = GDP-4-dehydro-alpha-D-rhamnose + H2O. The protein operates within nucleotide-sugar biosynthesis; GDP-L-fucose biosynthesis via de novo pathway; GDP-L-fucose from GDP-alpha-D-mannose: step 1/2. Its function is as follows. Catalyzes the conversion of GDP-D-mannose to GDP-4-dehydro-6-deoxy-D-mannose. This chain is GDP-mannose 4,6-dehydratase, found in Sinorhizobium fredii (strain HH103).